The sequence spans 714 residues: Polyribonucleotide nucleotidyltransferase (714 aa).

Positions 487 and 493 each coordinate Mg(2+). The KH domain maps to 554–613 (PRIEVMTIPVDKIREVIGSGGKVIREIVEKTGAKINIEDDGTIKIASASGKEIEAARKWI). In terms of domain architecture, S1 motif spans 623–691 (GVVYEGTVVK…ERGKVRLSMK (69 aa)).

Belongs to the polyribonucleotide nucleotidyltransferase family. Mg(2+) serves as cofactor.

Its subcellular location is the cytoplasm. The catalysed reaction is RNA(n+1) + phosphate = RNA(n) + a ribonucleoside 5'-diphosphate. Its function is as follows. Involved in mRNA degradation. Catalyzes the phosphorolysis of single-stranded polyribonucleotides processively in the 3'- to 5'-direction. This is Polyribonucleotide nucleotidyltransferase from Allorhizobium ampelinum (strain ATCC BAA-846 / DSM 112012 / S4) (Agrobacterium vitis (strain S4)).